A 306-amino-acid chain; its full sequence is Homoserine kinase (306 aa).

Residue 88–98 (PLARGLGSSAT) coordinates ATP.

Belongs to the GHMP kinase family. Homoserine kinase subfamily.

The protein resides in the cytoplasm. It carries out the reaction L-homoserine + ATP = O-phospho-L-homoserine + ADP + H(+). It participates in amino-acid biosynthesis; L-threonine biosynthesis; L-threonine from L-aspartate: step 4/5. Catalyzes the ATP-dependent phosphorylation of L-homoserine to L-homoserine phosphate. This is Homoserine kinase from Synechococcus sp. (strain ATCC 27144 / PCC 6301 / SAUG 1402/1) (Anacystis nidulans).